We begin with the raw amino-acid sequence, 192 residues long: Adenylate kinase (192 aa).

Residue 10-18 (GVPGVGSTT) coordinates ATP.

It belongs to the archaeal adenylate kinase family. As to quaternary structure, monomer.

The protein localises to the cytoplasm. It carries out the reaction AMP + ATP = 2 ADP. In Methanococcus vannielii (strain ATCC 35089 / DSM 1224 / JCM 13029 / OCM 148 / SB), this protein is Adenylate kinase.